The sequence spans 946 residues: Villin-4 (946 aa).

Gelsolin-like repeat units lie at residues 28 to 109, 152 to 219, 274 to 339, and 641 to 715; these read NFKP…ETEK, VHVK…EDGK, LEHE…TIMF, and EIHH…PQFF. Disordered stretches follow at residues 744–789, 801–832, and 844–902; these read ATPS…GRSP, PSTR…SSKQ, and GPTK…PAPD. Residues 765 to 777 show a composition bias toward polar residues; the sequence is QDKSQQRTRSMSH. Residues 874–883 show a composition bias toward acidic residues; the sequence is SENEPEDDEN. One can recognise an HP domain in the interval 881-946; it reads DENSTIYPYE…NRLKSDLQLF (66 aa).

It belongs to the villin/gelsolin family.

The protein resides in the cytoplasm. Its subcellular location is the cytoskeleton. In terms of biological role, ca(2+)-regulated actin-binding protein. Binds actin microfilaments (MFs). Involved in actin filament bundling, severing and capping. Caps the barbed end of actin filaments and is able to sever them in a calcium-dependent manner. This chain is Villin-4, found in Oryza sativa subsp. japonica (Rice).